The sequence spans 569 residues: Potassium-transporting ATPase potassium-binding subunit (569 aa).

10 consecutive transmembrane segments (helical) span residues 11–31 (LLLA…ACVF), 64–84 (LAYT…LYGI), 135–155 (AGLA…ALAV), 179–199 (LYLL…MGIP), 258–278 (FNIL…GKMV), 285–305 (WALI…VYIA), 384–404 (GLYG…LMVG), 423–443 (MLAV…AAVL), 490–510 (LGIS…AIAG), and 531–551 (LFVG…YFPA).

Belongs to the KdpA family. In terms of assembly, the system is composed of three essential subunits: KdpA, KdpB and KdpC.

Its subcellular location is the cell inner membrane. Its function is as follows. Part of the high-affinity ATP-driven potassium transport (or Kdp) system, which catalyzes the hydrolysis of ATP coupled with the electrogenic transport of potassium into the cytoplasm. This subunit binds the periplasmic potassium ions and delivers the ions to the membrane domain of KdpB through an intramembrane tunnel. The chain is Potassium-transporting ATPase potassium-binding subunit from Allorhizobium ampelinum (strain ATCC BAA-846 / DSM 112012 / S4) (Agrobacterium vitis (strain S4)).